Consider the following 599-residue polypeptide: MTTQVPPSALLPLNPEQLARLQAATTDLTPTQLAWVSGYFWGVLNQQPAALAATPAPAAEMPGITIISASQTGNARRVAEALRDDLLAAKLNVKLVNAGDYKFKQIASEKLLIVVTSTQGEGEPPEEAVALHKFLFSKKAPKLENTAFAVFSLGDSSYEFFCQSGKDFDSKLAELGGERLLDRVDADVEYQAAASEWRARVVDALKSRAPVAAPSQSVATGAVNEIHTSPYSKDAPLAASLSVNQKITGRNSEKDVRHIEIDLGDSGLRYQPGDALGVWYQNDPALVKELVELLWLKGDEPVTVEGKTLPLNEALQWHFELTVNTANIVENYATLTRSETLLPLVGDKAKLQHYAATTPIVDMVRFSPAQLDAEALINLLRPLTPRLYSIASSQAEVENEVHVTVGVVRYDVEGRARAGGASSFLADRVEEEGEVRVFIEHNDNFRLPTNPETPVIMIGPGTGIAPFRAFMQQRAADEAPGKNWLFFGNPHFTEDFLYQVEWQRYVKEGVLTRIDLAWSRDQKEKIYVQDKLREQGAELWRWINDGAHIYVCGDANRMAKDVEQALLEVIAEFGGMDTEAADEFLSELRVERRYQRDVY.

Residues 64-202 (ITIISASQTG…AASEWRARVV (139 aa)) enclose the Flavodoxin-like domain. FMN is bound by residues 70–75 (SQTGNA), 117–120 (STQG), and 153–162 (LGDSSYEFFC). One can recognise an FAD-binding FR-type domain in the interval 234-448 (DAPLAASLSV…IEHNDNFRLP (215 aa)). Residues T322, A356, 386–389 (RLYS), 404–406 (TVG), Y410, and 419–422 (GGAS) each bind FAD. NADP(+) is bound by residues 519–520 (SR), 525–529 (KIYVQ), and D561. Y599 contacts FAD.

This sequence belongs to the NADPH-dependent sulphite reductase flavoprotein subunit CysJ family. The protein in the N-terminal section; belongs to the flavodoxin family. In the C-terminal section; belongs to the flavoprotein pyridine nucleotide cytochrome reductase family. Alpha(8)-beta(8). The alpha component is a flavoprotein, the beta component is a hemoprotein. FAD is required as a cofactor. FMN serves as cofactor.

It catalyses the reaction hydrogen sulfide + 3 NADP(+) + 3 H2O = sulfite + 3 NADPH + 4 H(+). Its pathway is sulfur metabolism; hydrogen sulfide biosynthesis; hydrogen sulfide from sulfite (NADPH route): step 1/1. Its function is as follows. Component of the sulfite reductase complex that catalyzes the 6-electron reduction of sulfite to sulfide. This is one of several activities required for the biosynthesis of L-cysteine from sulfate. The flavoprotein component catalyzes the electron flow from NADPH -&gt; FAD -&gt; FMN to the hemoprotein component. The sequence is that of Sulfite reductase [NADPH] flavoprotein alpha-component from Escherichia coli O6:H1 (strain CFT073 / ATCC 700928 / UPEC).